The following is a 1802-amino-acid chain: U3 small nucleolar RNA-associated protein 10 (1802 aa).

An HEAT 1 repeat occupies 581–618; the sequence is MDLQALLPFVLVTLADPSERVRREAAGILTIIGSLHKN. Helical transmembrane passes span 946-966 and 1002-1022; these read VQSGMSYLLSLALGSLLAIVN and ALLLVAGLSVIAPELVLHSVM. HEAT repeat units follow at residues 1046-1083, 1253-1290, 1297-1335, and 1758-1795; these read QTIDQVVPALIQSLRNQKRDVVSGTSELLLSFTAAFEH, LSLVDFLDTIEVLLQRPNDELRRKVLRLLEGRLRQNPE, TRMLDFLSVLVKIVESSPDILLKHAAVACIDRIADKYGK, and ALLPEMLPYISELMEDEDENVEKEVRKWVKQIEDVLGE.

It belongs to the HEATR1/UTP10 family. In terms of assembly, component of the ribosomal small subunit (SSU) processome.

It localises to the nucleus. The protein resides in the nucleolus. It is found in the membrane. Involved in nucleolar processing of pre-18S ribosomal RNA. Involved in ribosome biosynthesis. The chain is U3 small nucleolar RNA-associated protein 10 from Aspergillus oryzae (strain ATCC 42149 / RIB 40) (Yellow koji mold).